A 427-amino-acid polypeptide reads, in one-letter code: Serine hydroxymethyltransferase (427 aa).

Residues Leu122 and 126–128 (GHL) contribute to the (6S)-5,6,7,8-tetrahydrofolate site. Residue Lys231 is modified to N6-(pyridoxal phosphate)lysine. 355 to 357 (SPF) contributes to the (6S)-5,6,7,8-tetrahydrofolate binding site.

It belongs to the SHMT family. Homodimer. It depends on pyridoxal 5'-phosphate as a cofactor.

It localises to the cytoplasm. The catalysed reaction is (6R)-5,10-methylene-5,6,7,8-tetrahydrofolate + glycine + H2O = (6S)-5,6,7,8-tetrahydrofolate + L-serine. The protein operates within one-carbon metabolism; tetrahydrofolate interconversion. Its pathway is amino-acid biosynthesis; glycine biosynthesis; glycine from L-serine: step 1/1. Functionally, catalyzes the reversible interconversion of serine and glycine with tetrahydrofolate (THF) serving as the one-carbon carrier. This reaction serves as the major source of one-carbon groups required for the biosynthesis of purines, thymidylate, methionine, and other important biomolecules. Also exhibits THF-independent aldolase activity toward beta-hydroxyamino acids, producing glycine and aldehydes, via a retro-aldol mechanism. The polypeptide is Serine hydroxymethyltransferase (Nostoc punctiforme (strain ATCC 29133 / PCC 73102)).